Consider the following 248-residue polypeptide: ATP synthase subunit a, chloroplastic (248 aa).

Transmembrane regions (helical) follow at residues 37–57 (AQVL…AVLA), 96–116 (VPFI…GALF), 135–155 (INTT…AGLH), 200–220 (LVVA…MMFL), and 221–241 (GLFT…AYIG).

The protein belongs to the ATPase A chain family. As to quaternary structure, F-type ATPases have 2 components, CF(1) - the catalytic core - and CF(0) - the membrane proton channel. CF(1) has five subunits: alpha(3), beta(3), gamma(1), delta(1), epsilon(1). CF(0) has four main subunits: a, b, b' and c.

It is found in the plastid. It localises to the chloroplast thylakoid membrane. Functionally, key component of the proton channel; it plays a direct role in the translocation of protons across the membrane. This chain is ATP synthase subunit a, chloroplastic, found in Marchantia polymorpha (Common liverwort).